Consider the following 213-residue polypeptide: MQPWLWLVFSMKLAALWSSSALIQTPSSLLVQTNHTAKMSCEVKSISKLTSIYWLRERQDPKDKYFEFLASWSSSKGVLYGESVDKKRNIILESSDSRRPFLSIMNVKPEDSDFYFCATVGSPKMVFGTGTKLTVVDVLPTTAPTKKTTLKMKKKKQCPFPHPETQKGLTCSLTTLSLLVVCILLLLAFLGVAVYFYCVRRRARIHFMKQFHK.

A signal peptide spans 1 to 21 (MQPWLWLVFSMKLAALWSSSA). Positions 22–133 (LIQTPSSLLV…KMVFGTGTKL (112 aa)) constitute an Ig-like V-type domain. Residues 22 to 175 (LIQTPSSLLV…QKGLTCSLTT (154 aa)) lie on the Extracellular side of the membrane. Asn34 carries N-linked (GlcNAc...) asparagine glycosylation. A disulfide bond links Cys41 and Cys117. A helical membrane pass occupies residues 176–196 (LSLLVVCILLLLAFLGVAVYF). At 197 to 213 (YCVRRRARIHFMKQFHK) the chain is on the cytoplasmic side.

Forms disulfide-linked heterodimers with CD8A at the cell surface. Interacts with CD3D; this interaction couples TCR-CD3 with CD8. Interacts with LCK. In terms of processing, palmitoylated at the cytoplasmic tail and thereby targets the heterodimer CD8A/CD8B to lipid rafts unlike CD8A homodimers.

Its subcellular location is the membrane. Its function is as follows. Integral membrane glycoprotein that plays an essential role in the immune response and serves multiple functions in responses against both external and internal offenses. In T-cells, functions primarily as a coreceptor for MHC class I molecule:peptide complex. The antigens presented by class I peptides are derived from cytosolic proteins while class II derived from extracellular proteins. Interacts simultaneously with the T-cell receptor (TCR) and the MHC class I proteins presented by antigen presenting cells (APCs). In turn, recruits the Src kinase LCK to the vicinity of the TCR-CD3 complex. A palmitoylation site in the cytoplasmic tail of CD8B chain contributes to partitioning of CD8 into the plasma membrane lipid rafts where signaling proteins are enriched. Once LCK recruited, it initiates different intracellular signaling pathways by phosphorylating various substrates ultimately leading to lymphokine production, motility, adhesion and activation of cytotoxic T-lymphocytes (CTLs). Additionally, plays a critical role in thymic selection of CD8+ T-cells. The chain is T-cell surface glycoprotein CD8 beta chain (Cd8b) from Mus musculus (Mouse).